A 196-amino-acid chain; its full sequence is ATP-dependent Clp protease proteolytic subunit (196 aa).

Catalysis depends on serine 96, which acts as the Nucleophile. Histidine 121 is an active-site residue.

This sequence belongs to the peptidase S14 family. In terms of assembly, fourteen ClpP subunits assemble into 2 heptameric rings which stack back to back to give a disk-like structure with a central cavity, resembling the structure of eukaryotic proteasomes.

The protein resides in the cytoplasm. It carries out the reaction Hydrolysis of proteins to small peptides in the presence of ATP and magnesium. alpha-casein is the usual test substrate. In the absence of ATP, only oligopeptides shorter than five residues are hydrolyzed (such as succinyl-Leu-Tyr-|-NHMec, and Leu-Tyr-Leu-|-Tyr-Trp, in which cleavage of the -Tyr-|-Leu- and -Tyr-|-Trp bonds also occurs).. Cleaves peptides in various proteins in a process that requires ATP hydrolysis. Has a chymotrypsin-like activity. Plays a major role in the degradation of misfolded proteins. This chain is ATP-dependent Clp protease proteolytic subunit, found in Streptococcus pneumoniae (strain P1031).